Reading from the N-terminus, the 336-residue chain is Flavonol synthase/flavanone 3-hydroxylase (336 aa).

The tract at residues E99–K118 is disordered. Positions M196–P296 constitute a Fe2OG dioxygenase domain. N204–Y206 provides a ligand contact to 2-oxoglutarate. The Fe cation site is built by H221, D223, and H277. R287–S289 is a binding site for 2-oxoglutarate.

It belongs to the iron/ascorbate-dependent oxidoreductase family. L-ascorbate serves as cofactor. The cofactor is Fe(2+). As to expression, expressed in young seedlings (at protein level). Expressed in roots, emerging leaves, shoot-root transition zone, trichomes, flowers and siliques. In cotyledons, expressed mostly on the adaxial side and only in guard cells on the abaxial side.

The protein localises to the cytoplasm. The protein resides in the nucleus. The catalysed reaction is a (2R,3R)-dihydroflavonol + 2-oxoglutarate + O2 = a flavonol + succinate + CO2 + H2O. It carries out the reaction a (2S)-flavan-4-one + 2-oxoglutarate + O2 = a (2R,3R)-dihydroflavonol + succinate + CO2. Its pathway is secondary metabolite biosynthesis; flavonoid biosynthesis. Its function is as follows. Catalyzes the formation of flavonols from dihydroflavonols. It can act on dihydrokaempferol to produce kaempferol, on dihydroquercetin to produce quercitin and on dihydromyricetin to produce myricetin. In vitro catalyzes the oxidation of both enantiomers of naringenin to give both cis- and trans-dihydrokaempferol. The sequence is that of Flavonol synthase/flavanone 3-hydroxylase (FLS1) from Arabidopsis thaliana (Mouse-ear cress).